Reading from the N-terminus, the 1237-residue chain is Cilia- and flagella-associated protein 61 (1237 aa).

The tract at residues Q278–V301 is disordered. Positions S281–L290 are enriched in basic and acidic residues.

As to quaternary structure, component of axonemal radial spokes, the protein complexes that link the outer microtubule doublets with the central pair of microtubules. Interacts with CFAP91/MAATS1, ODAD2/ARMC4, RSPH3A, ROPN1, ROPN1L and RSPH9. Interacts with DYNLT1, DYNC1I2 and TUBB3. Interacts with WDR35, IFT22 and IFT81.

It is found in the cytoplasm. Its subcellular location is the cytoskeleton. The protein localises to the flagellum axoneme. Involved in sperm flagellum assembly. Plays an essential role in the formation of the radial spokes in flagellum axoneme. The polypeptide is Cilia- and flagella-associated protein 61 (Homo sapiens (Human)).